The chain runs to 371 residues: MDYYNNDTPGYVYLEDGTLMKGIGFGAKGIRVGEIVFTTSMNGYPESLTDPSYKGQILVITHPLIGNYGVPEKNYVNGILTNFESERIQAEGLVISELTEPFKWNSKQTLHEWLLSEGIPGVYGIDTRAVVKRVRSRGVMMGIIASGVEVNNPEEYLKKKYDEMNFIQYTSPKAPIIHQGKTGDVVVVVDCGIKHGILYQLYLRGFTVVRVPCNYSADKIMDFYPKGLLFSNGPGNPNLLTDLVKNFREIIEYNLPTLGICLGHQIATMALGGKVKKMKFGHRAINKPVIDTTTGKSYITTHNHGYAILSKQDVPIHTRVWFYNPDDGTVEGWIHEKYNIITTQFHPEARPGPWDVTWVFDKFKKMVVGDA.

The CPSase stretch occupies residues 1-186 (MDYYNNDTPG…IHQGKTGDVV (186 aa)). L-glutamine-binding residues include S52, G233, and G235. The Glutamine amidotransferase type-1 domain occupies 185–371 (VVVVVDCGIK…KFKKMVVGDA (187 aa)). C261 acts as the Nucleophile in catalysis. L-glutamine is bound by residues L262, Q265, N303, G305, and Y306. Catalysis depends on residues H346 and E348.

The protein belongs to the CarA family. In terms of assembly, composed of two chains; the small (or glutamine) chain promotes the hydrolysis of glutamine to ammonia, which is used by the large (or ammonia) chain to synthesize carbamoyl phosphate. Tetramer of heterodimers (alpha,beta)4.

It catalyses the reaction hydrogencarbonate + L-glutamine + 2 ATP + H2O = carbamoyl phosphate + L-glutamate + 2 ADP + phosphate + 2 H(+). It carries out the reaction L-glutamine + H2O = L-glutamate + NH4(+). The protein operates within amino-acid biosynthesis; L-arginine biosynthesis; carbamoyl phosphate from bicarbonate: step 1/1. Its pathway is pyrimidine metabolism; UMP biosynthesis via de novo pathway; (S)-dihydroorotate from bicarbonate: step 1/3. Its function is as follows. Small subunit of the glutamine-dependent carbamoyl phosphate synthetase (CPSase). CPSase catalyzes the formation of carbamoyl phosphate from the ammonia moiety of glutamine, carbonate, and phosphate donated by ATP, constituting the first step of 2 biosynthetic pathways, one leading to arginine and/or urea and the other to pyrimidine nucleotides. The small subunit (glutamine amidotransferase) binds and cleaves glutamine to supply the large subunit with the substrate ammonia. This chain is Carbamoyl phosphate synthase small chain, found in Sulfolobus acidocaldarius (strain ATCC 33909 / DSM 639 / JCM 8929 / NBRC 15157 / NCIMB 11770).